Reading from the N-terminus, the 493-residue chain is Glycerol kinase (493 aa).

ADP is bound at residue Thr-13. Thr-13, Thr-14, and Ser-15 together coordinate ATP. Residue Thr-13 coordinates sn-glycerol 3-phosphate. Arg-17 lines the ADP pocket. Sn-glycerol 3-phosphate contacts are provided by Arg-83, Glu-84, Tyr-135, and Asp-244. Glycerol is bound by residues Arg-83, Glu-84, Tyr-135, Asp-244, and Gln-245. 2 residues coordinate ADP: Thr-266 and Gly-309. ATP is bound by residues Thr-266, Gly-309, Gln-313, and Gly-410. The ADP site is built by Gly-410 and Asn-414.

The protein belongs to the FGGY kinase family.

The enzyme catalyses glycerol + ATP = sn-glycerol 3-phosphate + ADP + H(+). It functions in the pathway polyol metabolism; glycerol degradation via glycerol kinase pathway; sn-glycerol 3-phosphate from glycerol: step 1/1. Inhibited by fructose 1,6-bisphosphate (FBP). Key enzyme in the regulation of glycerol uptake and metabolism. Catalyzes the phosphorylation of glycerol to yield sn-glycerol 3-phosphate. This chain is Glycerol kinase, found in Shewanella pealeana (strain ATCC 700345 / ANG-SQ1).